The sequence spans 875 residues: Cytosolic phospholipase A2 epsilon (875 aa).

Residues 16–70 form a disordered region; sequence THASEGHHGLGTSMLVPKNPQGEEDSKLGRNCSGFEDAQDPQTAVPSSPLLSMAS. One can recognise a C2 domain in the interval 60-183; the sequence is VPSSPLLSMA…CLRNKTHVKF (124 aa). The segment covering 61–70 has biased composition (low complexity); it reads PSSPLLSMAS. 5 residues coordinate Ca(2+): Asp97, Asp103, Asp153, Asp155, and Asp161. The PLA2c domain occupies 332 to 875; it reads PCSDTLDVRL…KKRMRSQCPS (544 aa). Residue Ser420 is the Nucleophile of the active site. Asp708 serves as the catalytic Proton acceptor. Position 808 is a phosphoserine (Ser808). The tract at residues 865-875 is required for localization at membrane structures; sequence EKKRMRSQCPS.

Ca(2+) is required as a cofactor. As to expression, predominantly expressed in brain, heart, skeletal muscle, testis and thyroid. Expressed in neurons but not astrocytes or microglia. Expressed at lower level in stomach.

Its subcellular location is the cytoplasm. The protein localises to the cytosol. The protein resides in the early endosome membrane. It is found in the lysosome membrane. It localises to the cell membrane. It carries out the reaction a 1,2-diacyl-sn-glycero-3-phosphoethanolamine + a 1,2-diacyl-sn-glycero-3-phosphocholine = an N-acyl-1,2-diacyl-sn-glycero-3-phosphoethanolamine + a 2-acyl-sn-glycero-3-phosphocholine + H(+). The catalysed reaction is 1-hexadecanoyl-2-octadecanoyl-sn-glycero-3-phosphocholine + 1,2-di-(9Z-octadecenoyl)-sn-glycero-3-phosphoethanolamine = 2-octadecanoyl-sn-glycero-3-phosphocholine + N-hexadecanoyl-1,2-di-(9Z-octadecenoyl)-sn-glycero-3-phosphoethanolamine + H(+). It catalyses the reaction 1-octadecanoyl-2-hexadecanoyl-sn-glycero-3-phosphocholine + 1,2-di-(9Z-octadecenoyl)-sn-glycero-3-phosphoethanolamine = N-octadecanoyl-1,2-di-(9Z-octadecenoyl)-sn-glycero-3-phosphoethanolamine + 2-hexadecanoyl-sn-glycero-3-phosphocholine + H(+). The enzyme catalyses 1,2-di-(9Z-octadecenoyl)-sn-glycero-3-phosphoethanolamine + 1,2-dihexadecanoyl-sn-glycero-3-phosphocholine = N-hexadecanoyl-1,2-di-(9Z-octadecenoyl)-sn-glycero-3-phosphoethanolamine + 2-hexadecanoyl-sn-glycero-3-phosphocholine + H(+). It carries out the reaction 1,2-di-(5Z,8Z,11Z,14Z-eicosatetraenoyl)-sn-glycero-3-phosphocholine + 1,2-di-(9Z-octadecenoyl)-sn-glycero-3-phosphoethanolamine = N-(5Z,8Z,11Z,14Z-eicosatetraenoyl)-1,2-di-(9Z-octadecenoyl)-sn-glycero-3-phosphoethanolamine + 2-(5Z,8Z,11Z,14Z)-eicosatetraenoyl-sn-glycero-3-phosphocholine + H(+). The catalysed reaction is 2 1,2-di-(9Z-octadecenoyl)-sn-glycero-3-phosphoethanolamine = N,1,2-tri-(9Z-octadecenoyl)-sn-glycero-3-phosphoethanolamine + 2-(9Z-octadecenoyl)-sn-glycero-3-phosphoethanolamine + H(+). It catalyses the reaction a 1,2-diacyl-sn-glycero-3-phosphocholine + H2O = a 1-acyl-sn-glycero-3-phosphocholine + a fatty acid + H(+). The enzyme catalyses 1-(1Z-octadecenyl)-2-(9Z-octadecenoyl)-sn-glycero-3-phosphoethanolamine + 1,2-dihexadecanoyl-sn-glycero-3-phosphocholine = 1-O-(1Z-octadecenoyl)-2-(9Z-octadecenoyl)-sn-glycero-3-phospho-N-hexadecanoyl-ethanolamine + 2-hexadecanoyl-sn-glycero-3-phosphocholine + H(+). It carries out the reaction 1-hexadecanoyl-2-(5Z,8Z,11Z,14Z-eicosatetraenoyl)-sn-glycero-3-phosphocholine + H2O = 1-hexadecanoyl-sn-glycero-3-phosphocholine + (5Z,8Z,11Z,14Z)-eicosatetraenoate + H(+). The catalysed reaction is 1-hexadecanoyl-sn-glycero-3-phosphocholine + H2O = sn-glycerol 3-phosphocholine + hexadecanoate + H(+). Stimulated by cytosolic Ca(2+). Stimulated by anionic phospholipids such as phosphatidylserine. Functionally, calcium-dependent N-acyltransferase involved in the biosynthesis of N-acyl ethanolamines (NAEs) in the brain. Transfers the sn-1 fatty acyl chain of phosphatidylcholine (fatty acyl donor) to the amine group of phosphatidylethanolamine (fatty acyl acceptor) to generate N-acyl phosphatidylethanolamine (NAPE). Similarly can use plasmenylethanolamine as a fatty acyl acceptor to form N-acyl plasmenylethanolamine (N-Acyl-PlsEt). Both NAPE and N-Acyl-PlsEt can serve as precursors of bioactive NAEs like N-arachidonoyl phosphatidylethanolamine also called anandamide. Has weak phospholipase A2 and lysophospholipase activities. Regulates intracellular membrane trafficking that requires modulation of membrane curvature as it occurs by enrichment in lysophospholipids. Promotes tubule formation involved in clathrin-independent endocytotic trafficking and cargo recycling. In Mus musculus (Mouse), this protein is Cytosolic phospholipase A2 epsilon (Pla2g4e).